We begin with the raw amino-acid sequence, 256 residues long: tRNA-cytidine(32) 2-sulfurtransferase 1 (256 aa).

A PP-loop motif motif is present at residues 38-43; sequence SGGKDS. Cys-113, Cys-116, and Cys-204 together coordinate [4Fe-4S] cluster.

It belongs to the TtcA family. In terms of assembly, homodimer. Mg(2+) is required as a cofactor. [4Fe-4S] cluster serves as cofactor.

Its subcellular location is the cytoplasm. The enzyme catalyses cytidine(32) in tRNA + S-sulfanyl-L-cysteinyl-[cysteine desulfurase] + AH2 + ATP = 2-thiocytidine(32) in tRNA + L-cysteinyl-[cysteine desulfurase] + A + AMP + diphosphate + H(+). The protein operates within tRNA modification. Catalyzes the ATP-dependent 2-thiolation of cytidine in position 32 of tRNA, to form 2-thiocytidine (s(2)C32). The sulfur atoms are provided by the cysteine/cysteine desulfurase (IscS) system. This chain is tRNA-cytidine(32) 2-sulfurtransferase 1, found in Francisella philomiragia subsp. philomiragia (strain ATCC 25017 / CCUG 19701 / FSC 153 / O#319-036).